We begin with the raw amino-acid sequence, 441 residues long: Zinc finger protein ZIC 3 (441 aa).

A C2H2-type 1; atypical zinc finger spans residues 222-257; it reads LSCKWLEESTMNHPQKTCDRTFSSMHELVTHMTMEH. A C2H2-type 2; atypical zinc finger spans residues 266–293; that stretch reads HICYWEECPRGGKSFKAKYKLVNHIRVH. 3 consecutive C2H2-type zinc fingers follow at residues 299–323, 329–353, and 359–381; these read FPCPFPGCGKIFARSENLKIHKRTH, FKCEFEGCDRRFANSSDRKKHMHVH, and YICKVCDKSYTHPSSLRKHMKVH. Residues 375-441 form a disordered region; the sequence is RKHMKVHESQ…LPPNFNEWYV (67 aa). Over residues 383–399 the composition is skewed to low complexity; that stretch reads SQGSDSSPAASSGYESA. The span at 406 to 429 shows a compositional bias: polar residues; sequence SANSEEPSKNSSATHQTNNNSHNT.

Belongs to the GLI C2H2-type zinc-finger protein family. As to expression, first detected at early gastrula (stage 10.25) in the dorsal lip and prospective neural plate. Also expressed in the mesoderm at early gastrulation, with expression strongest on the dorsal side. Mesodermal expression continues at stage 12 but is hardly detectable after stage 14. As gastrulation proceeds, expression decreases in the dorsal lip and increases in the prospective neural plate. At the neural plate stage (stage 14), expressed strongly in the prospective mesencephalon and anterior rhombencephalon, after which expression becomes stronger in the anterior neural folds. At early tailbud stage (stage 20), expression becomes restricted to the dorsal region of forebrain, midbrain and hindbrain, and weakly to the dorsal trunk. After mid-tailbud stage, expression decreases in the diencephalon, appears in the lateral mesoderm of the tailbud region and becomes restricted in the dorsal part of the neural tube.

The protein localises to the nucleus. Its subcellular location is the cytoplasm. Functionally, probably acts as a transcriptional activator. May bind to the minimal GLI-consensus sequence 5'-GGGTGGTC-3'. Can determine the ectodermal cell fate and promote the earliest step of neural and neural crest development. Involved in establishing left-right asymmetry in the embryo. In Xenopus laevis (African clawed frog), this protein is Zinc finger protein ZIC 3 (zic3).